The following is a 460-amino-acid chain: Hydroxymethylglutaryl-CoA synthase erg13B (460 aa).

Glu86 functions as the Proton donor/acceptor in the catalytic mechanism. The active-site Acyl-thioester intermediate is Cys120. Residues Cys120, Thr162, Ser212, His263, Lys272, Asn340, and Ser374 each contribute to the (3S)-3-hydroxy-3-methylglutaryl-CoA site. The active-site Proton donor/acceptor is His263.

It belongs to the thiolase-like superfamily. HMG-CoA synthase family.

The catalysed reaction is acetoacetyl-CoA + acetyl-CoA + H2O = (3S)-3-hydroxy-3-methylglutaryl-CoA + CoA + H(+). The protein operates within metabolic intermediate biosynthesis; (R)-mevalonate biosynthesis; (R)-mevalonate from acetyl-CoA: step 2/3. Functionally, hydroxymethylglutaryl-CoA synthase; part of the first module of ergosterol biosynthesis pathway that includes the early steps of the pathway, conserved across all eukaryotes, and which results in the formation of mevalonate from acetyl-coenzyme A (acetyl-CoA). Erg13A and erg13B condense acetyl-CoA with acetoacetyl-CoA to form hydroxymethylglutaryl-CoA (HMG-CoA). The first module starts with the action of the cytosolic acetyl-CoA acetyltransferase erg10B that catalyzes the formation of acetoacetyl-CoA. The hydroxymethylglutaryl-CoA synthases erg13A and erg13B then condense acetyl-CoA with acetoacetyl-CoA to form HMG-CoA. The rate-limiting step of the early module is the reduction to mevalonate by the 3-hydroxy-3-methylglutaryl-coenzyme A (HMG-CoA) reductases hmg1 and hmg2. Mevalonate is also a precursor for the extracellular siderophore triacetylfusarinine C (TAFC). This Aspergillus fumigatus (strain ATCC MYA-4609 / CBS 101355 / FGSC A1100 / Af293) (Neosartorya fumigata) protein is Hydroxymethylglutaryl-CoA synthase erg13B.